The following is a 953-amino-acid chain: Catenin alpha-2 (953 aa).

A Phosphothreonine modification is found at Thr632. Ser640, Ser651, and Ser901 each carry phosphoserine. Residues Glu912 to Thr927 are compositionally biased toward basic and acidic residues. A disordered region spans residues Glu912–Ser939. The span at Arg928 to Ile938 shows a compositional bias: basic residues. At Ser939 the chain carries Phosphoserine.

This sequence belongs to the vinculin/alpha-catenin family. In terms of assembly, interacts with CDH1 and CDH2. Interacts with ZNF639; recruits CTNNA2 to the nucleus. Interacts with F-actin. In terms of tissue distribution, expressed almost exclusively in the nervous system.

It is found in the cell membrane. Its subcellular location is the cytoplasm. The protein localises to the cytoskeleton. It localises to the cell junction. The protein resides in the adherens junction. It is found in the cell projection. Its subcellular location is the axon. The protein localises to the nucleus. In terms of biological role, may function as a linker between cadherin adhesion receptors and the cytoskeleton to regulate cell-cell adhesion and differentiation in the nervous system. Required for proper regulation of cortical neuronal migration and neurite growth. It acts as a negative regulator of Arp2/3 complex activity and Arp2/3-mediated actin polymerization. It thereby suppresses excessive actin branching which would impair neurite growth and stability. Regulates morphological plasticity of synapses and cerebellar and hippocampal lamination during development. Functions in the control of startle modulation. This chain is Catenin alpha-2 (Ctnna2), found in Mus musculus (Mouse).